The following is a 634-amino-acid chain: Probable potassium transport system protein Kup 2 (634 aa).

The next 12 membrane-spanning stretches (helical) occupy residues 20-40 (FWTL…TSPL), 64-84 (VLSL…VLLI), 110-130 (FAAI…DAII), 148-168 (PGFD…LFLV), 174-194 (AAVA…MAVA), 224-244 (AGLL…ALYA), 258-278 (WLVL…AMLL), 290-310 (LLFP…ATII), 348-368 (IYIP…VFAF), 377-397 (AYGI…FFVM), 405-425 (AAVA…FLMA), and 430-450 (IVDG…VMVT).

It belongs to the HAK/KUP transporter (TC 2.A.72) family.

It localises to the cell inner membrane. It catalyses the reaction K(+)(in) + H(+)(in) = K(+)(out) + H(+)(out). In terms of biological role, transport of potassium into the cell. Likely operates as a K(+):H(+) symporter. This Rhodopseudomonas palustris (strain ATCC BAA-98 / CGA009) protein is Probable potassium transport system protein Kup 2.